The primary structure comprises 346 residues: MTTSSSSPLSYKDAGVDIDAGDALVERIKPLAKKTMREGVLAGIGGFGALFEVPKRYKEPVLVSGTDGVGTKLRLAFEWNMHDTVGIDLVAMSVNDVLVQGAEPLFFLDYFACGKLDVDTAAAVVGGIAKGCELSGCALIGGETAEMPGMYPEGEYDLAGFAVGAVEKSKILTGKEVQPGDVVLGLASSGVHSNGFSLVRKCIERAGADRPATLDGKPFKQALMEPTRLYVKNVLAALAAHPIKALAHITGGGLLENIPRVLPEGTAAHLKKGSWPQTELFAWLQKTAGIDDFEMNRTFNNGIGMVVVVDAANAQATAKTLRDAGEQVYEIGVIAPRGEGAAVIVG.

Belongs to the AIR synthase family.

It localises to the cytoplasm. The enzyme catalyses 2-formamido-N(1)-(5-O-phospho-beta-D-ribosyl)acetamidine + ATP = 5-amino-1-(5-phospho-beta-D-ribosyl)imidazole + ADP + phosphate + H(+). It functions in the pathway purine metabolism; IMP biosynthesis via de novo pathway; 5-amino-1-(5-phospho-D-ribosyl)imidazole from N(2)-formyl-N(1)-(5-phospho-D-ribosyl)glycinamide: step 2/2. The protein is Phosphoribosylformylglycinamidine cyclo-ligase of Polaromonas sp. (strain JS666 / ATCC BAA-500).